Here is a 52-residue protein sequence, read N- to C-terminus: Metallothionein-2 (52 aa).

Repeats lie at residues 43–47 (QTCKC) and 48–52 (QTCKC).

Belongs to the metallothionein superfamily. Type 10 family.

Its function is as follows. The metallothioneins are involved in the cellular sequestration of toxic metal ions. This Candida glabrata (strain ATCC 2001 / BCRC 20586 / JCM 3761 / NBRC 0622 / NRRL Y-65 / CBS 138) (Yeast) protein is Metallothionein-2 (MT-II).